Consider the following 216-residue polypeptide: Nucleoside triphosphate pyrophosphatase (216 aa).

Asp82 (proton acceptor) is an active-site residue.

It belongs to the Maf family. It depends on a divalent metal cation as a cofactor.

The protein resides in the cytoplasm. It catalyses the reaction a ribonucleoside 5'-triphosphate + H2O = a ribonucleoside 5'-phosphate + diphosphate + H(+). The enzyme catalyses a 2'-deoxyribonucleoside 5'-triphosphate + H2O = a 2'-deoxyribonucleoside 5'-phosphate + diphosphate + H(+). Its function is as follows. Nucleoside triphosphate pyrophosphatase. May have a dual role in cell division arrest and in preventing the incorporation of modified nucleotides into cellular nucleic acids. The polypeptide is Nucleoside triphosphate pyrophosphatase (Mycobacterium ulcerans (strain Agy99)).